Consider the following 248-residue polypeptide: Ribosomal RNA small subunit methyltransferase J (248 aa).

S-adenosyl-L-methionine contacts are provided by residues 97 to 98 (RD), 113 to 114 (ER), and D167.

This sequence belongs to the methyltransferase superfamily. RsmJ family.

Its subcellular location is the cytoplasm. It catalyses the reaction guanosine(1516) in 16S rRNA + S-adenosyl-L-methionine = N(2)-methylguanosine(1516) in 16S rRNA + S-adenosyl-L-homocysteine + H(+). Functionally, specifically methylates the guanosine in position 1516 of 16S rRNA. The polypeptide is Ribosomal RNA small subunit methyltransferase J (Aeromonas hydrophila subsp. hydrophila (strain ATCC 7966 / DSM 30187 / BCRC 13018 / CCUG 14551 / JCM 1027 / KCTC 2358 / NCIMB 9240 / NCTC 8049)).